The sequence spans 185 residues: Ribosome-recycling factor (185 aa).

It belongs to the RRF family.

It localises to the cytoplasm. In terms of biological role, responsible for the release of ribosomes from messenger RNA at the termination of protein biosynthesis. May increase the efficiency of translation by recycling ribosomes from one round of translation to another. The chain is Ribosome-recycling factor from Rhodospirillum centenum (strain ATCC 51521 / SW).